Here is a 208-residue protein sequence, read N- to C-terminus: Putative proteasome subunit alpha type-4-B (208 aa).

It belongs to the peptidase T1A family. As to quaternary structure, component of the 20S core complex of the 26S proteasome. The 26S proteasome is composed of a core protease (CP), known as the 20S proteasome, capped at one or both ends by the 19S regulatory particle (RP/PA700). The 20S proteasome core is composed of 28 subunits that are arranged in four stacked rings, resulting in a barrel-shaped structure. The two end rings are each formed by seven alpha subunits, and the two central rings are each formed by seven beta subunits. The catalytic chamber with the active sites is on the inside of the barrel.

Its subcellular location is the cytoplasm. It is found in the nucleus. The proteasome is a multicatalytic proteinase complex which is characterized by its ability to cleave peptides with Arg, Phe, Tyr, Leu, and Glu adjacent to the leaving group at neutral or slightly basic pH. The proteasome has an ATP-dependent proteolytic activity. The chain is Putative proteasome subunit alpha type-4-B (PAC2) from Arabidopsis thaliana (Mouse-ear cress).